A 66-amino-acid polypeptide reads, in one-letter code: Beta-mammal toxin Cv2 (66 aa).

Residues 1–66 form the LCN-type CS-alpha/beta domain; that stretch reads KEGYIVNHST…VWPLPKKTCN (66 aa). 4 disulfides stabilise this stretch: cysteine 12–cysteine 65, cysteine 16–cysteine 41, cysteine 25–cysteine 46, and cysteine 29–cysteine 48.

In terms of tissue distribution, expressed by the venom gland.

The protein resides in the secreted. Is susceptible to be slightly neutralized by human antibodies scFvs 10FG2. Functionally, beta toxins bind voltage-independently at site-4 of sodium channels (Nav) and reduces peak current and shifts the voltage of activation toward more negative potentials thereby affecting sodium channel activation and promoting spontaneous and repetitive firing. This toxin is slightly toxic to mice. The polypeptide is Beta-mammal toxin Cv2 (Centruroides villegasi (Scorpion)).